Reading from the N-terminus, the 426-residue chain is Cytochrome c biogenesis protein CcsB (426 aa).

3 helical membrane-spanning segments follow: residues 14–34 (LKIAILLLLLIAISCAAGTLI), 72–92 (SFWFLFLLIWLGLALSVCSFR), and 162–182 (LGPILIHLGMILLMIGATYGS).

This sequence belongs to the Ccs1/CcsB family. In terms of assembly, may interact with CcsA.

The protein localises to the cellular thylakoid membrane. Required during biogenesis of c-type cytochromes (cytochrome c6 and cytochrome f) at the step of heme attachment. This Prochlorococcus marinus (strain NATL1A) protein is Cytochrome c biogenesis protein CcsB.